The sequence spans 201 residues: UPF0301 protein Bpet0561 (201 aa).

The protein belongs to the UPF0301 (AlgH) family.

The protein is UPF0301 protein Bpet0561 of Bordetella petrii (strain ATCC BAA-461 / DSM 12804 / CCUG 43448).